Here is a 339-residue protein sequence, read N- to C-terminus: DNA repair protein RAD51 homolog 1 (339 aa).

The tract at residues 1–22 (MAMQMQLEASADTSVEEESFGP) is disordered. Position 2 is an N-acetylalanine (alanine 2). Residue threonine 13 is modified to Phosphothreonine. Residue serine 14 is modified to Phosphoserine. Residues 48–77 (TVEAVAYAPKKELINIKGISEAKADKILTE) enclose the HhH domain. At tyrosine 54 the chain carries Phosphotyrosine; by ABL1. Glycyl lysine isopeptide (Lys-Gly) (interchain with G-Cter in ubiquitin) cross-links involve residues lysine 58 and lysine 64. Residue 127–134 (GEFRTGKT) participates in ATP binding. Positions 184–257 (DVLDNVAYAR…FLRMLLRLAD (74 aa)) are interaction with PALB2. The Nuclear export signal; masked by the interaction with BRCA2 signature appears at 245 to 260 (LARFLRMLLRLADEFG). Position 309 is a phosphothreonine; by CHEK1 (threonine 309).

It belongs to the RecA family. RAD51 subfamily. In terms of assembly, forms linear homooligomers, giving rise to a RAD51 nucleoprotein filament, which is essential for strand-pairing reactions during DNA recombination. Interacts with BRCA1 and either directly or indirectly with p53. Interacts with XRCC3, RAD54L and RAD54B. Interacts with the BCDX2 subcomplex RAD51C:RAD51B. Component of the homologous recombination repair (HR) complex composed of ERCC5/XPG, BRCA2, PALB2, DSS1 and RAD51. Interacts directly with PALB2 which may serve as a scaffold for a HR complex containing PALB2, BRCA2, RAD51C, RAD51 and XRCC3. Interacts with RAD51AP1 and RAD51AP2. Interacts with CHEK1, and this may require prior phosphorylation of CHEK1. Interacts with the MND1-PSMC3IP heterodimer. Found in a complex, at least composed of BLM, RAD51 and SPIDR; the complex formation is mediated by SPIDR. Interacts with SPIDR; the interaction is direct and recruits RAD51 to DNA damage sites. Interacts with FIGNL1 (via N-terminal one-half region); the interaction is direct. Interacts with RAD51AP1 (via C-terminal region); the interaction is direct. Interacts with NABP2, RPA1, PALB2 and RAD51. Interacts with SWI5/C9orf119, and at lower level with SFR1/MEIR5. Interacts with hyperphosphorylated RPA2; this interaction is necessary for efficient recruitment to chromatin in response to DNA damage. Interacts with SWSAP1; involved in homologous recombination repair. Interacts with PARPBP, BRCA2 and RECQL5; these interactions interfere with the formation of the RAD51-DNA homologous recombination structure. Interacts with POLQ; POLQ acts as an inhibitor of homology-recombination repair (HR) pathway by limiting RAD51 accumulation at resected ends. Interacts with POLN. Interacts with FBH1. Interacts with RFWD3. Interacts with the MCM8-MCM9 complex; the interaction recruits RAD51 to DNA damage sites. Component of a multiprotein complex with MEIOB and SPATA22. Interacts with the complex BRME1:HSF2BP:BRCA2. Interacts with HELQ; stimulating HELQ DNA helicase activity and ability to unwing DNA. Interacts with MMS22L; the interaction is direct and promotes recruitment of RAD51 to sites of DNA damage. Interacts with the ATAD5 RFC-like complex. Within the ATAD5 RFC-like complex, interacts with ATAD5 (via N-terminus); the interaction is direct and enhanced under replication stress. Interacts with WDR48; the interaction is enhanced under replication stress. Interacts with DNA helicase ZGRF1; the interaction promotes RAD51 strand exchange activity. Interacts (when phosphorylated) with TOPBP1; interaction takes place following phosphorylation by CK2 and PLK1 and promotes recruitment to DNA damage sites. Interacts with GRB2; this interaction inhibits RAD51 ATPase activity to stabilize RAD51 on stalled replication forks. Ubiquitinated by the SCF(FBH1) E3 ubiquitin ligase complex, regulating RAD51 subcellular location and preventing its association with DNA. Ubiquitinated by RFWD3 in response to DNA damage: ubiquitination leads to degradation by the proteasome, promoting homologous recombination. In terms of processing, phosphorylation of Thr-309 by CHEK1 may enhance association with chromatin at sites of DNA damage and promote DNA repair by homologous recombination. Phosphorylated at Ser-14 by PLK1, triggering phosphorylation at Thr-13 by CK2, thereby promoting interaction with TOPBP1 and recruitment to DNA damage sites during S-phase. Phosphorylation by ABL1 inhibits function. In terms of tissue distribution, expressed in the testes (at protein level). Expressed in the brain (at protein level). Expressed in the thymus, spleen, ovary and small intestine.

It localises to the nucleus. Its subcellular location is the cytoplasm. It is found in the perinuclear region. The protein resides in the mitochondrion matrix. The protein localises to the chromosome. It localises to the cytoskeleton. Its subcellular location is the microtubule organizing center. It is found in the centrosome. Its function is as follows. Plays an important role in homologous strand exchange, a key step in DNA repair through homologous recombination (HR). Binds to single-stranded DNA in an ATP-dependent manner to form nucleoprotein filaments which are essential for the homology search and strand exchange. Catalyzes the recognition of homology and strand exchange between homologous DNA partners to form a joint molecule between a processed DNA break and the repair template. Recruited to resolve stalled replication forks during replication stress. Part of a PALB2-scaffolded HR complex containing BRCA2 and RAD51C and which is thought to play a role in DNA repair by HR. Plays a role in regulating mitochondrial DNA copy number under conditions of oxidative stress in the presence of RAD51C and XRCC3. Also involved in interstrand cross-link repair. In Mus musculus (Mouse), this protein is DNA repair protein RAD51 homolog 1.